The following is a 423-amino-acid chain: Osteomodulin (423 aa).

The N-terminal stretch at 1–20 (MGFLSPIYVLFFCFGVRVYC) is a signal peptide. Sulfotyrosine occurs at positions 22, 25, 31, 39, 51, and 77. Residues 53–91 (VPFYNNILGCAKECFCPTNFPTSMYCDNRKLKTIPIIPM) form the LRRNT domain. 11 LRR repeats span residues 92 to 113 (HIQQ…SFIN), 116 to 129 (HLKE…KIKS), 142 to 164 (NLQQ…PKSL), 165 to 184 (ERLL…AMDG), 187 to 207 (NVTM…KEKT), 213 to 233 (KLMQ…GLPS), 234 to 255 (SLMY…YFDK), 258 to 279 (KLHA…IFNL), 281 to 294 (NLIE…KLKQ), 301 to 322 (NLEH…MICP), and 331 to 353 (HLTY…IFFC). N-linked (GlcNAc...) asparagine glycosylation is found at Asn-113 and Asn-121. Residue Asn-187 is glycosylated (N-linked (GlcNAc...) asparagine). N-linked (GlcNAc...) asparagine glycosylation is found at Asn-242 and Asn-278. Asn-316 carries an N-linked (GlcNAc...) asparagine glycan. Cys-321 and Cys-353 form a disulfide bridge. The tract at residues 381–406 (RSYQEEEEEDDHDSQDNTLEGQEVSD) is disordered. Tyr-413 and Tyr-414 each carry sulfotyrosine.

Belongs to the small leucine-rich proteoglycan (SLRP) family. SLRP class II subfamily. Binds the alpha(V)beta(3)-integrin. Post-translationally, glycosylated; contains keratan sulfate. As to expression, bone specific.

The protein resides in the secreted. Its subcellular location is the extracellular space. It is found in the extracellular matrix. Functionally, may be implicated in biomineralization processes. Has a function in binding of osteoblasts via the alpha(V)beta(3)-integrin. The chain is Osteomodulin (Omd) from Mus musculus (Mouse).